The sequence spans 287 residues: L-ascorbate peroxidase 3 (287 aa).

An N-acetylalanine modification is found at alanine 2. Histidine 40 functions as the Proton acceptor in the catalytic mechanism. Residues 46–66 (DAQSKTGGPNGSIRNEEEHTH) form a disordered region. Histidine 160 contributes to the heme b binding site. K(+)-binding residues include threonine 161, threonine 177, and aspartate 184. Residues 259–279 (ILAQSAFGVAVAAAVVAFGYF) traverse the membrane as a helical segment. The AKR2A-binding sequence (ABS) required for peroxisome membrane targeting signature appears at 281–287 (EIRKRMK).

This sequence belongs to the peroxidase family. Ascorbate peroxidase subfamily. As to quaternary structure, interacts via its C-terminal region with AKR2A and AKR2B. It depends on heme b as a cofactor.

It localises to the peroxisome membrane. The protein resides in the glyoxysome membrane. It catalyses the reaction L-ascorbate + H2O2 = L-dehydroascorbate + 2 H2O. Its function is as follows. Plays a key role in hydrogen peroxide removal. The chain is L-ascorbate peroxidase 3 (APX3) from Arabidopsis thaliana (Mouse-ear cress).